The chain runs to 322 residues: tRNA U34 carboxymethyltransferase (322 aa).

Carboxy-S-adenosyl-L-methionine contacts are provided by residues Lys-91, Trp-105, Lys-110, Gly-129, Leu-179–Glu-180, Met-195, Tyr-199, and Arg-314.

This sequence belongs to the class I-like SAM-binding methyltransferase superfamily. CmoB family. In terms of assembly, homotetramer.

The enzyme catalyses carboxy-S-adenosyl-L-methionine + 5-hydroxyuridine(34) in tRNA = 5-carboxymethoxyuridine(34) in tRNA + S-adenosyl-L-homocysteine + H(+). Its function is as follows. Catalyzes carboxymethyl transfer from carboxy-S-adenosyl-L-methionine (Cx-SAM) to 5-hydroxyuridine (ho5U) to form 5-carboxymethoxyuridine (cmo5U) at position 34 in tRNAs. The polypeptide is tRNA U34 carboxymethyltransferase (Pseudomonas aeruginosa (strain ATCC 15692 / DSM 22644 / CIP 104116 / JCM 14847 / LMG 12228 / 1C / PRS 101 / PAO1)).